The sequence spans 460 residues: ATP synthase subunit beta (460 aa).

150–157 (GGAGVGKT) contributes to the ATP binding site.

The protein belongs to the ATPase alpha/beta chains family. F-type ATPases have 2 components, CF(1) - the catalytic core - and CF(0) - the membrane proton channel. CF(1) has five subunits: alpha(3), beta(3), gamma(1), delta(1), epsilon(1). CF(0) has three main subunits: a(1), b(2) and c(9-12). The alpha and beta chains form an alternating ring which encloses part of the gamma chain. CF(1) is attached to CF(0) by a central stalk formed by the gamma and epsilon chains, while a peripheral stalk is formed by the delta and b chains.

It is found in the cell inner membrane. The enzyme catalyses ATP + H2O + 4 H(+)(in) = ADP + phosphate + 5 H(+)(out). Its function is as follows. Produces ATP from ADP in the presence of a proton gradient across the membrane. The catalytic sites are hosted primarily by the beta subunits. This chain is ATP synthase subunit beta, found in Klebsiella pneumoniae subsp. pneumoniae (strain ATCC 700721 / MGH 78578).